The primary structure comprises 813 residues: Calpain-7 (813 aa).

Met-1 carries the post-translational modification N-acetylmethionine. Thr-95 is subject to Phosphothreonine. A Calpain catalytic domain is found at Arg-232–Pro-540. Catalysis depends on residues Cys-290, His-458, and Asn-478. The interval Ala-541 to Ala-701 is domain III. A domain N region spans residues Gly-702–Gln-813.

Belongs to the peptidase C2 family. Ubiquitous.

Its subcellular location is the nucleus. Calcium-regulated non-lysosomal thiol-protease. In Mus musculus (Mouse), this protein is Calpain-7 (Capn7).